The primary structure comprises 137 residues: Large ribosomal subunit protein uL16 (137 aa).

Belongs to the universal ribosomal protein uL16 family. In terms of assembly, part of the 50S ribosomal subunit.

Its function is as follows. Binds 23S rRNA and is also seen to make contacts with the A and possibly P site tRNAs. The polypeptide is Large ribosomal subunit protein uL16 (Xanthobacter autotrophicus (strain ATCC BAA-1158 / Py2)).